The primary structure comprises 417 residues: Phosphoglycerate kinase 2 (417 aa).

14 residues coordinate (2R)-3-phosphoglycerate: valine 23, aspartate 24, phenylalanine 25, asparagine 26, asparagine 38, arginine 39, serine 62, histidine 63, glycine 65, arginine 66, leucine 121, arginine 122, histidine 168, and arginine 169. ADP is bound at residue glycine 212. Glycine 212 contacts CDP. Positions 213 and 214 each coordinate AMP. Alanine 213 is a binding site for ATP. Position 213 (alanine 213) interacts with Mg(2+). Residue aspartate 217 participates in CDP binding. Aspartate 217 provides a ligand contact to Mg(2+). Lysine 218 lines the AMP pocket. Lysine 218 provides a ligand contact to ATP. Glycine 236 is an ADP binding site. Residue glycine 236 participates in CDP binding. Positions 237 and 312 each coordinate AMP. ATP is bound by residues glycine 237 and glycine 312. The CDP site is built by glycine 337 and phenylalanine 342. ADP is bound at residue phenylalanine 342. Glutamate 343 provides a ligand contact to AMP. Residues glutamate 343, aspartate 374, and threonine 375 each contribute to the ATP site. Residue aspartate 374 participates in Mg(2+) binding.

This sequence belongs to the phosphoglycerate kinase family. As to quaternary structure, monomer. It depends on Mg(2+) as a cofactor.

The protein localises to the cytoplasm. Its subcellular location is the mitochondrion. It catalyses the reaction (2R)-3-phosphoglycerate + ATP = (2R)-3-phospho-glyceroyl phosphate + ADP. It functions in the pathway carbohydrate degradation; glycolysis; pyruvate from D-glyceraldehyde 3-phosphate: step 2/5. Functionally, catalyzes one of the two ATP producing reactions in the glycolytic pathway via the reversible conversion of 1,3-diphosphoglycerate to 3-phosphoglycerate. Both L- and D- forms of purine and pyrimidine nucleotides can be used as substrates, but the activity is much lower on pyrimidines. Negatively regulates the biosynthesis of acetyl-CoA from pyruvate in the mitochondrion. The protein is Phosphoglycerate kinase 2 (PGK2) of Rhizopus niveus.